A 75-amino-acid polypeptide reads, in one-letter code: Small ribosomal subunit protein bS18 (75 aa).

This sequence belongs to the bacterial ribosomal protein bS18 family. In terms of assembly, part of the 30S ribosomal subunit. Forms a tight heterodimer with protein bS6.

In terms of biological role, binds as a heterodimer with protein bS6 to the central domain of the 16S rRNA, where it helps stabilize the platform of the 30S subunit. This is Small ribosomal subunit protein bS18 from Buchnera aphidicola subsp. Schizaphis graminum (strain Sg).